Reading from the N-terminus, the 505-residue chain is Alpha-1-syntrophin (505 aa).

The segment at 1–77 (MASGRRAPRT…AEPGAASPPL (77 aa)) is disordered. PH domains follow at residues 6–269 (RAPR…AQVN) and 293–401 (DIKR…DGCH). The region spanning 87-170 (RVTVRKADAG…EVVLEVKYMK (84 aa)) is the PDZ domain. 5 positions are modified to phosphoserine: serine 101, serine 184, serine 189, serine 193, and serine 200. The interval 180–211 (ASGTSVGWDSPPASPLQRQPSSPGPPPRDLRD) is disordered. The SU domain maps to 449–505 (PFEKLQMSSDDGASLLFLDFGGAEGEIQLDLHSCPKTMVFIIHSFLSAKVTRLGLLA). Residues 483 to 505 (PKTMVFIIHSFLSAKVTRLGLLA) are calmodulin-binding.

Belongs to the syntrophin family. As to quaternary structure, monomer and homodimer. Interacts with the dystrophin related protein DTNA; SGCG of the dystrophin glycoprotein complex; NOS1; GRB2; GA; TGFA; MAPK12 and the sodium channel proteins SCN4A and SCN5A. Interacts with the dystrophin protein DMD in a calmodulin dependent manner and with related protein UTRN; SGCA of the dystrophin glycoprotein complex; F-actin; calmodulin and with the other members of the syntrophin family SNTB1 and SNTB2. Interacts with MYOC; regulates muscle hypertrophy. Interacts with DTNB. In terms of processing, phosphorylated by CaM-kinase II. Phosphorylation may inhibit the interaction with DMD.

The protein localises to the cell membrane. Its subcellular location is the sarcolemma. It localises to the cell junction. It is found in the cytoplasm. The protein resides in the cytoskeleton. Functionally, adapter protein that binds to and probably organizes the subcellular localization of a variety of membrane proteins. May link various receptors to the actin cytoskeleton and the extracellular matrix via the dystrophin glycoprotein complex. Plays an important role in synapse formation and in the organization of UTRN and acetylcholine receptors at the neuromuscular synapse. Binds to phosphatidylinositol 4,5-bisphosphate. The sequence is that of Alpha-1-syntrophin (SNTA1) from Bos taurus (Bovine).